A 216-amino-acid chain; its full sequence is Orotate phosphoribosyltransferase (216 aa).

5-phospho-alpha-D-ribose 1-diphosphate-binding positions include arginine 101, lysine 105, histidine 107, and 127-135 (EDLISTGGS). Serine 131 provides a ligand contact to orotate.

The protein belongs to the purine/pyrimidine phosphoribosyltransferase family. PyrE subfamily. As to quaternary structure, homodimer. It depends on Mg(2+) as a cofactor.

The catalysed reaction is orotidine 5'-phosphate + diphosphate = orotate + 5-phospho-alpha-D-ribose 1-diphosphate. It functions in the pathway pyrimidine metabolism; UMP biosynthesis via de novo pathway; UMP from orotate: step 1/2. In terms of biological role, catalyzes the transfer of a ribosyl phosphate group from 5-phosphoribose 1-diphosphate to orotate, leading to the formation of orotidine monophosphate (OMP). The chain is Orotate phosphoribosyltransferase from Cutibacterium acnes (strain DSM 16379 / KPA171202) (Propionibacterium acnes).